The chain runs to 638 residues: Chaperone protein DnaK (638 aa).

Phosphothreonine; by autocatalysis is present on Thr198. The segment at 599–638 (IYESQQAEGGAEGGPSGHHDDGIVDADYEEVKDDNTKKSA) is disordered. Positions 621-630 (IVDADYEEVK) are enriched in acidic residues.

Belongs to the heat shock protein 70 family.

Its function is as follows. Acts as a chaperone. The protein is Chaperone protein DnaK of Allorhizobium ampelinum (strain ATCC BAA-846 / DSM 112012 / S4) (Agrobacterium vitis (strain S4)).